The primary structure comprises 835 residues: MIGILKKVFDVNQRQIKRMQKTVEQIDALESSIKPLTDEQLKGKTLEFKERLTKGETVDDLLPEAFAVVREAATRVLGMRPYGVQLMGGIALHEGNISEMKTGEGKTLTSTLPVYLNALTGKGVHVVTVNEYLAQRDANEMGQLHEFLGLTVGINLNSMSREEKQEAYAADITYSTNNELGFDYLRDNMVLYKEQCVQRPLHFAIIDEVDSILVDEARTPLIISGQAQKSTELYMFANAFVRTLENEKDYSFDVKTKNVMLTEDGITKAEKAFHIENLFDLKHVALLHHINQALRAHVVMHRDTDYVVQEGEIVIVDQFTGRLMKGRRYSEGLHQAIEAKEGVEIQNESMTLATITFQNYFRMYEKLSGMTGTAKTEEEEFRNIYNMNVIVIPTNKPIIRDDRADLIFKSMKGKFNAVVEDIVNRHKQGQPVLVGTVAIETSELISKMLTRKGVRHNILNAKNHAREADIIAEAGMKGAVTIATNMAGRGTDIKLGDDIKNIGLAVIGTERHESRRIDNQLRGRAGRQGDPGVTQFYLSMEDELMRRFGSDNMKAMMDRLGMDDSQPIESKMVSRAVESAQKRVEGNNYDARKQLLQYDDVLRQQREVIYKQRQEVMESENLRGIIEGMMKSTVERAVALHTQEEIEEDWNIKGLVDYLNTNLLQEGDVKEEELRRLAPEEMSEPIIAKLIERYNDKEKLMPEEQMREFEKVVVFRVVDTKWTEHIDAMDHLREGIHLRAYGQIDPLREYQMEGFAMFESMIASIEEEISRYIMKAEIEQNLERQEVVQGEAVHPSSDGEEAKKKPVVKGDQVGRNDLCKCGSGKKYKNCCGIGK.

Residues Gln-85, 103–107 (GEGKT), and Asp-492 contribute to the ATP site. Residues 788 to 807 (VQGEAVHPSSDGEEAKKKPV) form a disordered region. Zn(2+) is bound by residues Cys-819, Cys-821, Cys-830, and Cys-831.

Belongs to the SecA family. Monomer and homodimer. Part of the essential Sec protein translocation apparatus which comprises SecA, SecYEG and auxiliary proteins SecDF. Other proteins may also be involved. The cofactor is Zn(2+).

Its subcellular location is the cell membrane. The protein localises to the cytoplasm. It carries out the reaction ATP + H2O + cellular proteinSide 1 = ADP + phosphate + cellular proteinSide 2.. Functionally, part of the Sec protein translocase complex. Interacts with the SecYEG preprotein conducting channel. Has a central role in coupling the hydrolysis of ATP to the transfer of proteins into and across the cell membrane, serving as an ATP-driven molecular motor driving the stepwise translocation of polypeptide chains across the membrane. In Bacillus anthracis, this protein is Protein translocase subunit SecA 1.